The chain runs to 353 residues: Quinolinate synthase (353 aa).

The iminosuccinate site is built by His49 and Ser70. Cys115 contacts [4Fe-4S] cluster. Iminosuccinate contacts are provided by residues 141–143 (YAN) and Ser158. Cys202 provides a ligand contact to [4Fe-4S] cluster. Residues 228–230 (HPE) and Thr245 contribute to the iminosuccinate site. Residue Cys299 coordinates [4Fe-4S] cluster.

Belongs to the quinolinate synthase family. Type 1 subfamily. [4Fe-4S] cluster serves as cofactor.

It is found in the cytoplasm. The enzyme catalyses iminosuccinate + dihydroxyacetone phosphate = quinolinate + phosphate + 2 H2O + H(+). It functions in the pathway cofactor biosynthesis; NAD(+) biosynthesis; quinolinate from iminoaspartate: step 1/1. In terms of biological role, catalyzes the condensation of iminoaspartate with dihydroxyacetone phosphate to form quinolinate. The sequence is that of Quinolinate synthase from Hahella chejuensis (strain KCTC 2396).